The primary structure comprises 301 residues: Runt-related transcription factor rnt-1 (301 aa).

The region spanning 10–138 (NFIEQQPAPA…TVDGPRDARI (129 aa)) is the Runt domain. 3 interaction with DNA regions span residues 40 to 44 (RSNKS), 95 to 103 (RFVGRSGRG), and 128 to 137 (VTVDGPRDAR). Chloride contacts are provided by arginine 99 and valine 130. Residues 237-301 (PSIFITPTSD…SSSPTIWRPF (65 aa)) form a disordered region. Serine 255 bears the Phosphoserine mark. Positions 255 to 276 (SPRSITKSSETSINLIQETPES) are enriched in polar residues. Positions 285 to 301 (VSITSSNSSSPTIWRPF) are enriched in low complexity.

Interacts with CBFbeta homolog bro-1; acts to increase the affinity and specificity of interaction of rnt-1 with DNA. Interacts with TGF-beta pathway protein sma-4. May be ubiquitinated in order to be targeted for proteasome-mediated degradation in intestinal cells. Post-translationally, may be phosphorylated by members of the p38 MAP kinase pathway. As to expression, expressed in the intestine.

The protein resides in the nucleus. Its function is as follows. Transcription factor. Binds to regulatory DNA sequences in order to modulate transcription; negatively autoregulates its own expression, perhaps dependent upon CBF beta homolog bro-1. Promotes proliferation, and prevents differentiation, of seam cells, a stem cell-like lineage, acting in concert with bro-1. Required for controlling cell proliferation in the seam cells, perhaps by repressing expression of cyclin-dependent kinase inhibitor cki-1. Inhibition of seam cell differentiation is regulated by rnt-1 and bro-1, perhaps acting upstream of pop-1, by antagonizing pop-1 repressor function. Required for asymmetrical cell divisions in the lineage derived from a posterior embryonic seam cell, the T blast cell, and for asymmetric expression of zinc finger protein tlp-1. Regulates growth and male tail development. Involved in the oxidative stress response, perhaps downstream of the p38 MAP kinase pathway, and acting as part of a negative feedback loop via a transcriptional target gene, tyrosine-protein phosphatase vhp-1. Positively modulates dopaminergic signaling in a non-cell autonomous manner. May be involved in TGF-beta signaling. The protein is Runt-related transcription factor rnt-1 of Caenorhabditis elegans.